The following is a 1337-amino-acid chain: uncharacterized protein (1337 aa).

Disordered regions lie at residues 1–94 and 119–174; these read MPTS…QSSA and ARDI…PSFF. Composition is skewed to low complexity over residues 18–37 and 68–79; these read SNTS…ASGS and SSTHFQSSHSVS. The span at 80–94 shows a compositional bias: polar residues; sequence NAHNQSPLNQSQSSA. The segment covering 123–147 has biased composition (low complexity); the sequence is PQQPSHSQNPSSSSSSSSSQSSQHS. Basic and acidic residues predominate over residues 157–167; that stretch reads NEKKSLDDPSP. Transmembrane regions (helical) follow at residues 209 to 229, 241 to 261, 267 to 287, 328 to 348, 361 to 381, and 387 to 407; these read GLKP…LVLA, FFVV…PMLW, FLLL…ATVA, VRPL…ALFI, CVFS…YPYF, and LFFI…TLFI. 2 disordered regions span residues 623 to 662 and 868 to 894; these read SHVR…SHKS and YDEN…DADH. Residues 626–644 show a composition bias toward polar residues; the sequence is RTGSNNSEAPLAAKTSTTK. The span at 868-880 shows a compositional bias: basic and acidic residues; sequence YDENIHNDVDKDM. 6 helical membrane passes run 917–937, 975–995, 997–1017, 1021–1041, 1066–1086, and 1275–1295; these read MNVF…PAFC, IFGT…GSGH, LGNA…IQFI, FVIL…LTVT, FLTV…PQPR, and FAVG…IMFI.

It is found in the membrane. This is an uncharacterized protein from Schizosaccharomyces pombe (strain 972 / ATCC 24843) (Fission yeast).